The primary structure comprises 250 residues: Probable cytokinin riboside 5'-monophosphate phosphoribohydrolase LOGL6 (250 aa).

Substrate contacts are provided by residues E98, 116–117, and 133–139; these read RK and GYGTLEE.

The protein belongs to the LOG family. As to expression, expressed in roots, leaves, stems, tiller buds, shoot apex, immature inflorescences and flowers.

It catalyses the reaction N(6)-(dimethylallyl)adenosine 5'-phosphate + H2O = N(6)-dimethylallyladenine + D-ribose 5-phosphate. The enzyme catalyses 9-ribosyl-trans-zeatin 5'-phosphate + H2O = trans-zeatin + D-ribose 5-phosphate. Functionally, cytokinin-activating enzyme working in the direct activation pathway. Phosphoribohydrolase that converts inactive cytokinin nucleotides to the biologically active free-base forms. The protein is Probable cytokinin riboside 5'-monophosphate phosphoribohydrolase LOGL6 (LOGL6) of Oryza sativa subsp. japonica (Rice).